The following is a 237-amino-acid chain: D-aminoacyl-tRNA deacylase (237 aa).

The protein belongs to the DtdA deacylase family. Monomer. Zn(2+) serves as cofactor.

The enzyme catalyses a D-aminoacyl-tRNA + H2O = a tRNA + a D-alpha-amino acid + H(+). The catalysed reaction is glycyl-tRNA(Ala) + H2O = tRNA(Ala) + glycine + H(+). In terms of biological role, D-aminoacyl-tRNA deacylase with broad substrate specificity. By recycling D-aminoacyl-tRNA to D-amino acids and free tRNA molecules, this enzyme counteracts the toxicity associated with the formation of D-aminoacyl-tRNA entities in vivo. This Saccharolobus islandicus (strain Y.N.15.51 / Yellowstone #2) (Sulfolobus islandicus) protein is D-aminoacyl-tRNA deacylase.